We begin with the raw amino-acid sequence, 77 residues long: Acyl carrier protein (77 aa).

The Carrier domain maps to 1 to 76 (MATFDDVKAV…DVVNYIDNLK (76 aa)). S36 is subject to O-(pantetheine 4'-phosphoryl)serine.

This sequence belongs to the acyl carrier protein (ACP) family. In terms of processing, 4'-phosphopantetheine is transferred from CoA to a specific serine of apo-ACP by AcpS. This modification is essential for activity because fatty acids are bound in thioester linkage to the sulfhydryl of the prosthetic group.

It localises to the cytoplasm. It participates in lipid metabolism; fatty acid biosynthesis. Functionally, carrier of the growing fatty acid chain in fatty acid biosynthesis. This chain is Acyl carrier protein, found in Campylobacter jejuni subsp. doylei (strain ATCC BAA-1458 / RM4099 / 269.97).